A 492-amino-acid chain; its full sequence is MKTTSSQPRAIYYVVALQIWEYFSFYGMRALLILYLTNQLKYDDNHAYALFSAYCSLVYVTPILGGYLADKLLGNRMAVMLGALLMAIGHLVLGASETAPVFLYLSLAIIVCGYGLFKSNVSCLLGELYEPADPRRDGGFSLMYAAGNIGSIIAPIACGYVQEEYSWAMGFALAAIGMVAGLVIFLCGNRHFQHTAGVNRQALCARRFLLPNWGWLLVLLVTAPLLIAVLFWQEWSVYALIVATVIGLAVLARIYLRAETDKQRKDLRLIVVLTAFSLLFWAFAQQGGSSISLYIDRFVNRHIMSYEVPTAMFQSVNAFAVMLCGMVLAWLVKESVGGNRTVRIWGKFALGLGLMSAGFCILTLSARWSAAYGQSSMPLMVLGLAVMGFAELFIDPVAMSQITRIEIPGVTGVLTGIYMLLSGAIANYLAGVIADQTSQASFDAAGAVNYSIDAYIKVFSQITWGALACVGVVLVIWLYHSLKVRTRRLAVE.

Helical transmembrane passes span 14–34 (VVAL…LLIL), 49–69 (ALFS…GYLA), 91–111 (LVLG…AIIV), 138–158 (GGFS…PIAC), 167–187 (WAMG…IFLC), 212–232 (NWGW…VLFW), 236–256 (SVYA…RIYL), 269–289 (LIVV…QGGS), 312–332 (MFQS…AWLV), 344–364 (IWGK…ILTL), 379–399 (LMVL…PVAM), 413–433 (VLTG…AGVI), and 458–478 (VFSQ…VIWL).

This sequence belongs to the major facilitator superfamily. Proton-dependent oligopeptide transporter (POT/PTR) (TC 2.A.17) family. DtpD subfamily.

It localises to the cell inner membrane. Functionally, probable proton-dependent permease that transports dipeptides. In Klebsiella pneumoniae (strain 342), this protein is Dipeptide permease D.